Reading from the N-terminus, the 147-residue chain is MSTYTPKAGDVTRTWHVIDATDVVLGRLAVQAANLLRGKHKPTFAPHVDGGDFVVIINADKVAISGNKREGKFLYHHSGHPGGLKSRSVGEVLDKNPDRLVEKAVVGMLPKNKLGRAISSKLKVYAGPNHPHAAQQPVPFEIKQVAQ.

The protein belongs to the universal ribosomal protein uL13 family. In terms of assembly, part of the 50S ribosomal subunit.

Functionally, this protein is one of the early assembly proteins of the 50S ribosomal subunit, although it is not seen to bind rRNA by itself. It is important during the early stages of 50S assembly. The protein is Large ribosomal subunit protein uL13 of Rhodococcus opacus (strain B4).